A 453-amino-acid polypeptide reads, in one-letter code: tRNA hydroxylation protein P (453 aa).

It belongs to the peptidase U32 family.

Its function is as follows. Involved in prephenate-dependent formation of 5-hydroxyuridine (ho5U) modification at position 34 in tRNAs, the first step in 5-carboxymethoxyuridine (cmo5U) biosynthesis. Involved differently in ho5U formation in each tRNA; tRNA(Leu3) and tRNA(Pro3) are major targets of TrhP. The chain is tRNA hydroxylation protein P from Escherichia coli (strain K12).